The following is a 132-amino-acid chain: Small ribosomal subunit protein uS8 (132 aa).

It belongs to the universal ribosomal protein uS8 family. In terms of assembly, part of the 30S ribosomal subunit. Contacts proteins S5 and S12.

Functionally, one of the primary rRNA binding proteins, it binds directly to 16S rRNA central domain where it helps coordinate assembly of the platform of the 30S subunit. This Borreliella afzelii (strain PKo) (Borrelia afzelii) protein is Small ribosomal subunit protein uS8.